A 229-amino-acid chain; its full sequence is Type III pantothenate kinase (229 aa).

Residue 7–14 (DVGNSSVD) coordinates ATP. Substrate contacts are provided by residues Tyr-78 and 85–88 (GTDR). Asp-87 functions as the Proton acceptor in the catalytic mechanism. An ATP-binding site is contributed by Thr-110. Thr-161 contributes to the substrate binding site.

It belongs to the type III pantothenate kinase family. As to quaternary structure, homodimer. Requires NH4(+) as cofactor. The cofactor is K(+).

The protein resides in the cytoplasm. The catalysed reaction is (R)-pantothenate + ATP = (R)-4'-phosphopantothenate + ADP + H(+). It functions in the pathway cofactor biosynthesis; coenzyme A biosynthesis; CoA from (R)-pantothenate: step 1/5. In terms of biological role, catalyzes the phosphorylation of pantothenate (Pan), the first step in CoA biosynthesis. This chain is Type III pantothenate kinase, found in Aquifex aeolicus (strain VF5).